A 726-amino-acid polypeptide reads, in one-letter code: Sensory/regulatory protein RpfC (726 aa).

Topologically, residues 1 to 22 are periplasmic; that stretch reads MKSPLPWLKRRLSGRADSEHAQ. Residues 1–22 form a sensor region; the sequence is MKSPLPWLKRRLSGRADSEHAQ. A helical membrane pass occupies residues 23 to 40; that stretch reads NLIRIIITTLFISYLGWR. Residues 41–51 are Cytoplasmic-facing; the sequence is YQHTHGDTLMA. Residues 52–72 traverse the membrane as a helical segment; it reads TWLILVGELLVSLGLMVAILL. Topologically, residues 73–94 are periplasmic; the sequence is RPQVSHTRRLIGMLLDYTCTGA. The chain crosses the membrane as a helical span at residues 95 to 115; sequence IMAIQGEPASPLYAVCMWVTI. Topologically, residues 116–127 are cytoplasmic; sequence GNGLRYGSNYLR. A helical transmembrane segment spans residues 128 to 148; sequence AATAMGSLCFLGAILISPYWK. The Periplasmic portion of the chain corresponds to 149-151; that stretch reads ANP. A helical membrane pass occupies residues 152 to 172; it reads YLSWGLLLGLIAVPLYFDSLL. Residues 173–726 are Cytoplasmic-facing; the sequence is RAMTRAVREA…DGECSPRSNE (554 aa). A Histidine kinase domain is found at 195–417; the sequence is NMSHEFRTPL…VFWFELPMAI (223 aa). Phosphohistidine; by autocatalysis is present on histidine 198. The Response regulatory domain occupies 463–581; sequence RMLVADDHEA…KLLDTLADLA (119 aa). At aspartate 512 the chain carries 4-aspartylphosphate. An HPt domain is found at 618 to 711; the sequence is GEEFERQFVR…KAGKDALDAR (94 aa). The residue at position 657 (histidine 657) is a Phosphohistidine.

At low DSF concentrations, interacts with RpfF. In terms of processing, autophosphorylated. Activation may require a sequential transfer of a phosphate group from a His in the primary transmitter domain, to an Asp in the receiver domain and to a His in the secondary transmitter domain.

The protein localises to the cell inner membrane. The catalysed reaction is ATP + protein L-histidine = ADP + protein N-phospho-L-histidine.. Binding of DSF to the sensor region causes allosteric change, which facilitates RpfC autophosphorylation. Its function is as follows. Hybrid sensor kinase that regulates diverse biological functions through two distinct molecular mechanisms. At low cell density, the extracellular concentration of the diffusible signaling factor (DSF) is below a threshold, and unphosphorylated RpfC is involved in the negative regulation of DSF synthesis, via direct interaction with the DSF synthase RpfF. Interaction prevents synthesis of DSF, which remains at a basal level. This activity does not involve the phosphorelay mechanism and is not dependent on RpfG. Is also member of the two-component regulatory system RpfG/RpfC, which is involved in the perception and response to DSF, which is essential for cell-cell signaling. At high cell density, the level of extracellular DSF increases and binding of DSF to the sensor region of RpfC causes autophosphorylation of RpfC, which results in the release of RpfF and the activation of RpfG via a four-step phosphorelay. Activation of RpfG leads to the positive regulation of biofilm dispersal and the production of virulence factors. The sequence is that of Sensory/regulatory protein RpfC (rpfC) from Xanthomonas campestris pv. campestris (strain 8004).